The sequence spans 287 residues: Ribosomal RNA small subunit methyltransferase I (287 aa).

The protein belongs to the methyltransferase superfamily. RsmI family.

It localises to the cytoplasm. It catalyses the reaction cytidine(1402) in 16S rRNA + S-adenosyl-L-methionine = 2'-O-methylcytidine(1402) in 16S rRNA + S-adenosyl-L-homocysteine + H(+). In terms of biological role, catalyzes the 2'-O-methylation of the ribose of cytidine 1402 (C1402) in 16S rRNA. The polypeptide is Ribosomal RNA small subunit methyltransferase I (Streptococcus pyogenes serotype M18 (strain MGAS8232)).